The sequence spans 936 residues: Aftiphilin (936 aa).

Residues 1–36 (MEPDIIRMYSSSPPPLDNGAEDDDDDEFGEFGGFSE) are disordered. The segment at 1–523 (MEPDIIRMYS…ARKSSGTGTE (523 aa)) is interaction with AP1G1, AP1G2, GGA1 and GGA3. Residues 19–29 (GAEDDDDDEFG) show a composition bias toward acidic residues. A WXXF motif 1 motif is present at residues 28 to 31 (FGEF). S151 carries the phosphoserine modification. 2 disordered regions span residues 197–216 (TDDL…STHS) and 374–409 (KTSD…LDDS). Basic and acidic residues predominate over residues 374 to 389 (KTSDDEVGSPKEESRK). The interval 386–610 (ESRKFTNFQS…EAWQSHRTDE (225 aa)) is interaction with AP1G1. S395 carries the phosphoserine modification. The WXXF motif 2 motif lies at 432 to 435 (FGDF). Residues 436-438 (GDF) carry the WXXF motif 3 (partial) motif. Residues 478 to 481 (FGEF) carry the WXXF motif 4 motif. S518 is modified (phosphoserine). Positions 589–637 (GDQQATESHHRKEAWQSHRTDENIDTPGTPKTHSVPSATSKGAVASGHL) are disordered. The span at 595 to 610 (ESHHRKEAWQSHRTDE) shows a compositional bias: basic and acidic residues. T617 carries the phosphothreonine modification. The segment covering 617–628 (TPKTHSVPSATS) has biased composition (polar residues). The short motif at 716 to 718 (YQW) is the CLTCL1/Clathrin-binding element. The segment at 825–829 (LLNLD) is clathrin-binding.

In terms of assembly, self-associates. Interacts with GGA1 (via GAE domain). Interacts with GGA3 (via GAE domain), AP1G1 (via GAE domain) and AP1G2 (via GAE domain). Component of the aftiphilin/p200/gamma-synergin complex, at least composed of AFTPH/aftiphilin, HEATR5B/p200a and SYNRG/gamma-synergin, which plays a role in the AP1G1/AP-1-mediated protein trafficking from early to recycling endosomes. Within the complex interacts with HEATR5B/p200a and SYNRG/gamma-synergin; the interactions are direct. Interacts with AP1G1/AP-1; the interaction is required to recruit AFTPH/aftiphilin to the perinuclear region of the cell. Interacts with CLTCL1/Clathrin.

It is found in the cytoplasm. It localises to the perinuclear region. Its subcellular location is the cytoplasmic vesicle. The protein resides in the clathrin-coated vesicle. Its function is as follows. Component of clathrin-coated vesicles. Component of the aftiphilin/p200/gamma-synergin complex, which plays roles in AP1G1/AP-1-mediated protein trafficking including the trafficking of transferrin from early to recycling endosomes, and the membrane trafficking of furin and the lysosomal enzyme cathepsin D between the trans-Golgi network (TGN) and endosomes. This Homo sapiens (Human) protein is Aftiphilin (AFTPH).